Consider the following 1010-residue polypeptide: Peroxisome proliferator-activated receptor gamma coactivator 1-beta (1010 aa).

The segment at 1–91 (MAGNDCGALL…FFQIDSENEA (91 aa)) is abolishes DNA transcriptional activity when missing. The segment at 115–134 (GLDEGDTPSCTPASPAPLSV) is disordered. The LXXLL motif 1 signature appears at 140–144 (LERLL). Residues Ser145 and Ser148 each carry the phosphoserine modification. The short motif at 156–160 (LQKLL) is the LXXLL motif 2 element. 3 disordered regions span residues 165-214 (SPTA…RPCT), 227-282 (PRGK…QVPK), and 306-329 (PQRA…PRSR). Polar residues-rich tracts occupy residues 178–189 (TWSQTSLSSRSQ) and 264–279 (PQDS…NSAQ). An LXXLL motif 3 motif is present at residues 342 to 346 (LRELL). The segment covering 369–384 (TPQSRTRPPKDSQASP) has biased composition (polar residues). 3 disordered regions span residues 369 to 475 (TPQS…VCPV), 517 to 567 (GLTD…CLML), and 590 to 674 (GTAG…QKRP). Ser383 is subject to Phosphoserine. The segment covering 411-428 (LRLEVKRDVNKPARQKRE) has biased composition (basic and acidic residues). Residues 429-449 (EDEEEEEEEEEEEEKEDEEEE) show a composition bias toward acidic residues. Positions 521–532 (SSQGQQLPLGSQ) are enriched in low complexity. Residues 604–618 (PMEEDPFKQDTKHSP) are compositionally biased toward basic and acidic residues. Composition is skewed to polar residues over residues 619-638 (GQDT…TATP) and 659-670 (QHATTQPVSQAG). At Ser628 the chain carries Phosphoserine. The HCFC1-binding-motif (HBM) motif lies at 681–684 (DHDY). 2 disordered regions span residues 714-744 (HQGA…SMQL) and 778-881 (DTVF…KKRR). Residues 782–794 (EDSSSSSGESSFL) are compositionally biased toward low complexity. Residues 795–811 (LEEEEEEGGEEDDEGED) are compositionally biased toward acidic residues. The segment covering 832 to 852 (SRQLCSRSRSSSGSSSCSSWS) has biased composition (low complexity). An RRM domain is found at 889–963 (RVVYIRNLSG…RNEPSFHLSY (75 aa)).

Interacts with estrogen receptor alpha/ESR1. Interacts with Sterol regulatory binding transcription factor 1/SREBF1, PPAR-alpha/PPARA, thyroid hormone receptor beta/THRB and host cell factor/HCFC1. Interacts with Estrogen-related receptor gamma/ESRRG and alpha/ESRRA. Interacts with PRDM16. Ubiquitous with higher expression in heart, brown adipose tissue.

The protein resides in the nucleus. Its function is as follows. Plays a role of stimulator of transcription factors and nuclear receptors activities. Activates transcriptional activity of estrogen receptor alpha, nuclear respiratory factor 1 (NRF1) and glucocorticoid receptor in the presence of glucocorticoids. May play a role in constitutive non-adrenergic-mediated mitochondrial biogenesis as suggested by increased basal oxygen consumption and mitochondrial number when overexpressed. May be part of the pathways regulating the elevation of gluconeogenesis, beta-oxidation of fatty acids and ketogenesis during fasting. Stimulates SREBP-mediated lipogenic gene expression in the liver. Induces energy expenditure and antagonizes obesity when overexpressed. Also induces the expression of mitochondrial genes involved in oxidative metabolism. Induces the expression of PERM1 in the skeletal muscle in an ESRRA-dependent manner. This is Peroxisome proliferator-activated receptor gamma coactivator 1-beta (Ppargc1b) from Rattus norvegicus (Rat).